A 192-amino-acid polypeptide reads, in one-letter code: Ion-translocating oxidoreductase complex subunit A (192 aa).

Transmembrane regions (helical) follow at residues 5 to 25 (LLLL…FLGL), 39 to 59 (IGMS…SYLV), 65 to 85 (LPFD…AVVV), 102 to 122 (ALGI…VALL), 134 to 154 (AIYG…FSAM), and 171 to 191 (AIAM…TGLV).

The protein belongs to the NqrDE/RnfAE family. In terms of assembly, the complex is composed of six subunits: RnfA, RnfB, RnfC, RnfD, RnfE and RnfG.

The protein localises to the cell inner membrane. Functionally, part of a membrane-bound complex that couples electron transfer with translocation of ions across the membrane. This chain is Ion-translocating oxidoreductase complex subunit A, found in Shewanella sp. (strain MR-4).